Consider the following 399-residue polypeptide: L-2-hydroxyglutarate dehydrogenase (399 aa).

This sequence belongs to the L2HGDH family. It depends on FAD as a cofactor.

The catalysed reaction is (S)-2-hydroxyglutarate + A = 2-oxoglutarate + AH2. Functionally, catalyzes the dehydrogenation of L-2-hydroxyglutarate (L2HG or(S)-2-hydroxyglutarate) to 2-oxoglutarate (alpha-ketoglutarate). Active in vitro with the artificial electron acceptor 2,6-dichlorophenolindophenol (DCPIP). Also displays a very low oxidase activity in vitro on L-2-hydroxyglutarate with O2 as the electron acceptor, but this activity is most likely not physiological. The sequence is that of L-2-hydroxyglutarate dehydrogenase from Indibacter alkaliphilus (strain CCUG 57479 / KCTC 22604 / LW1).